Reading from the N-terminus, the 304-residue chain is Glycine--tRNA ligase alpha subunit (304 aa).

This sequence belongs to the class-II aminoacyl-tRNA synthetase family. As to quaternary structure, tetramer of two alpha and two beta subunits.

The protein localises to the cytoplasm. The catalysed reaction is tRNA(Gly) + glycine + ATP = glycyl-tRNA(Gly) + AMP + diphosphate. This Pectobacterium atrosepticum (strain SCRI 1043 / ATCC BAA-672) (Erwinia carotovora subsp. atroseptica) protein is Glycine--tRNA ligase alpha subunit.